Consider the following 235-residue polypeptide: Effector CFEM1 (235 aa).

The first 17 residues, 1-17 (MKFSAPVLAIFLASASA), serve as a signal peptide directing secretion. Positions 18–114 (QSTAELAAQI…ASASASSSAS (97 aa)) constitute a CFEM domain. Disulfide bonds link cysteine 30/cysteine 72, cysteine 34/cysteine 67, cysteine 44/cysteine 51, and cysteine 53/cysteine 88. Residue aspartate 48 participates in heme binding. A lipid anchor (GPI-anchor amidated threonine) is attached at threonine 211. The propeptide at 212 to 235 (AAGVKEEASFFIPAAVALFAVFAV) is removed in mature form.

Belongs to the RBT5 family.

It is found in the cell membrane. The protein localises to the secreted. It localises to the host cytoplasm. Its subcellular location is the host nucleus. The protein resides in the host cell membrane. Its function is as follows. Appears to function during host infection, and may play a role in suppressing the host immune response. The chain is Effector CFEM1 from Marssonina brunnea f. sp. multigermtubi (strain MB_m1) (Marssonina leaf spot fungus).